Consider the following 419-residue polypeptide: Transcription termination factor Rho (419 aa).

Residues Asp48–Lys123 enclose the Rho RNA-BD domain. RNA-binding regions lie at residues Gly61 to Arg66, Asp78 to Tyr80, and Glu108 to Tyr110. ATP-binding positions include Gly169–Gly174, Lys181–Met186, and Arg212. The interval Val284–Gly288 is RNA-binding 2.

It belongs to the Rho family. Homohexamer. The homohexamer assembles into an open ring structure.

In terms of biological role, facilitates transcription termination by a mechanism that involves Rho binding to the nascent RNA, activation of Rho's RNA-dependent ATPase activity, and release of the mRNA from the DNA template. The polypeptide is Transcription termination factor Rho (Buchnera aphidicola subsp. Baizongia pistaciae (strain Bp)).